The primary structure comprises 428 residues: Ectoine/5-hydroxyectoine TRAP transporter large permease protein UehC (428 aa).

12 helical membrane-spanning segments follow: residues 9-29, 49-69, 99-119, 139-159, 172-192, 217-237, 242-262, 273-293, 302-322, 324-344, 366-386, and 400-420; these read MIVLLLLGFPMMIPLIAGAFI, LAGIRPASLIAVPMFIFAADI, AAACTMFGAVSGSTQATVVAI, ALIVNASDIAFLIPPSIGMII, FIAGIGPGLLILVLFSAYAYI, ALWPMGFPVIIIGGIYGGVFS, AAACVLYALVLEVLVFRSMSL, GLITAIVFILVGAGAAFSWVI, ILGAIGIAEMGPIGVLFVISI, FFIGCMFVDPIVVILVLVPVF, VAIGSATPPFGCDIFTAIAVF, and FILMLLGVSVALIFFPQIALF.

It belongs to the TRAP transporter large permease family. The complex comprises the extracytoplasmic solute receptor protein UehA, and the two transmembrane proteins UehB and UehC.

It localises to the cell inner membrane. Its function is as follows. Part of the tripartite ATP-independent periplasmic (TRAP) transport system UehABC, which imports both ectoine and 5-hydroxyectoine as nutrients, and not as osmoprotectants. The protein is Ectoine/5-hydroxyectoine TRAP transporter large permease protein UehC of Ruegeria pomeroyi (strain ATCC 700808 / DSM 15171 / DSS-3) (Silicibacter pomeroyi).